Consider the following 180-residue polypeptide: ATP-dependent protease subunit HslV (180 aa).

Residue Thr-5 is part of the active site. Residues Gly-161, Cys-164, and Thr-167 each coordinate Na(+).

This sequence belongs to the peptidase T1B family. HslV subfamily. A double ring-shaped homohexamer of HslV is capped on each side by a ring-shaped HslU homohexamer. The assembly of the HslU/HslV complex is dependent on binding of ATP.

The protein resides in the cytoplasm. It catalyses the reaction ATP-dependent cleavage of peptide bonds with broad specificity.. With respect to regulation, allosterically activated by HslU binding. Its function is as follows. Protease subunit of a proteasome-like degradation complex believed to be a general protein degrading machinery. In Campylobacter curvus (strain 525.92), this protein is ATP-dependent protease subunit HslV.